Reading from the N-terminus, the 187-residue chain is Inosine triphosphate pyrophosphatase (187 aa).

An ITP-binding site is contributed by 11–16 (TSNKNK). Glu39 is a binding site for Mg(2+). Residues Lys51, 67-68 (DT), Lys84, 143-146 (FGWD), Lys164, and 169-170 (HR) contribute to the ITP site.

The protein belongs to the HAM1 NTPase family. As to quaternary structure, homodimer. Mg(2+) is required as a cofactor. It depends on Mn(2+) as a cofactor.

It localises to the cytoplasm. The protein resides in the nucleus. It carries out the reaction ITP + H2O = IMP + diphosphate + H(+). The enzyme catalyses dITP + H2O = dIMP + diphosphate + H(+). It catalyses the reaction XTP + H2O = XMP + diphosphate + H(+). Functionally, pyrophosphatase that hydrolyzes non-canonical purine nucleotides such as inosine triphosphate (ITP), deoxyinosine triphosphate (dITP) or xanthosine 5'-triphosphate (XTP) to their respective monophosphate derivatives. The enzyme does not distinguish between the deoxy- and ribose forms. Probably excludes non-canonical purines from RNA and DNA precursor pools, thus preventing their incorporation into RNA and DNA and avoiding chromosomal lesions. This chain is Inosine triphosphate pyrophosphatase, found in Aspergillus fumigatus (strain ATCC MYA-4609 / CBS 101355 / FGSC A1100 / Af293) (Neosartorya fumigata).